Here is a 92-residue protein sequence, read N- to C-terminus: RNA-binding protein Hfq (92 aa).

The region spanning 11–71 is the Sm domain; sequence DRFLNHLRVN…ISTIIPSSYV (61 aa).

This sequence belongs to the Hfq family. In terms of assembly, homohexamer.

RNA chaperone that binds small regulatory RNA (sRNAs) and mRNAs to facilitate mRNA translational regulation in response to envelope stress, environmental stress and changes in metabolite concentrations. Also binds with high specificity to tRNAs. In Thermotoga maritima (strain ATCC 43589 / DSM 3109 / JCM 10099 / NBRC 100826 / MSB8), this protein is RNA-binding protein Hfq.